The chain runs to 479 residues: Ribosomal RNA small subunit methyltransferase F (479 aa).

Residues 125–131 (AAAPGSK), Glu-149, Asp-176, and Asp-194 each bind S-adenosyl-L-methionine. Catalysis depends on Cys-247, which acts as the Nucleophile.

The protein belongs to the class I-like SAM-binding methyltransferase superfamily. RsmB/NOP family.

The protein resides in the cytoplasm. It carries out the reaction cytidine(1407) in 16S rRNA + S-adenosyl-L-methionine = 5-methylcytidine(1407) in 16S rRNA + S-adenosyl-L-homocysteine + H(+). In terms of biological role, specifically methylates the cytosine at position 1407 (m5C1407) of 16S rRNA. The chain is Ribosomal RNA small subunit methyltransferase F from Escherichia coli (strain SE11).